A 306-amino-acid polypeptide reads, in one-letter code: tRNA pseudouridine synthase B (306 aa).

Residue Asp43 is the Nucleophile of the active site.

This sequence belongs to the pseudouridine synthase TruB family. Type 1 subfamily.

The enzyme catalyses uridine(55) in tRNA = pseudouridine(55) in tRNA. Functionally, responsible for synthesis of pseudouridine from uracil-55 in the psi GC loop of transfer RNAs. The polypeptide is tRNA pseudouridine synthase B (Anaplasma marginale (strain St. Maries)).